We begin with the raw amino-acid sequence, 1125 residues long: Tip elongation aberrant protein 3 (1125 aa).

5 Kelch repeats span residues 73–123 (FMYL…CSAD), 124–179 (TIYL…LVDS), 181–226 (LWIF…KANM), 259–308 (KIFV…TIDD), and 310–360 (VYIY…SKNN). Phosphoserine occurs at positions 430, 437, 460, 523, 980, 982, 983, 984, 1078, and 1080. The disordered stretch occupies residues 507 to 530 (PLPNGNDTISRSSESSSPINESES). Low complexity predominate over residues 515-530 (ISRSSESSSPINESES).

The protein resides in the cell tip. Its function is as follows. Acts as a cell end marker required for efficient new end take-off (NETO), whereby growth is activated at the cell end to generate bipolarity in extending cells. Also required for proper placement of the septum. The chain is Tip elongation aberrant protein 3 (tea3) from Schizosaccharomyces pombe (strain 972 / ATCC 24843) (Fission yeast).